The following is a 122-amino-acid chain: Large ribosomal subunit protein uL14c (122 aa).

This sequence belongs to the universal ribosomal protein uL14 family. Part of the 50S ribosomal subunit.

The protein resides in the plastid. Its subcellular location is the chloroplast. Functionally, binds to 23S rRNA. This Phalaenopsis aphrodite subsp. formosana (Moth orchid) protein is Large ribosomal subunit protein uL14c.